The following is a 158-amino-acid chain: Protein FAM177B (158 aa).

Positions 36–48 are enriched in acidic residues; sequence EYSTEEEEEEEKE. Residues 36-59 form a disordered region; it reads EYSTEEEEEEEKEEQSTNSTLDPS.

It belongs to the FAM177 family.

This chain is Protein FAM177B (FAM177B), found in Homo sapiens (Human).